The primary structure comprises 551 residues: Intestinal-type alkaline phosphatase 2 (551 aa).

Residues M1–S19 form the signal peptide. D61 is a Mg(2+) binding site. Zn(2+)-binding residues include D61 and S111. The Phosphoserine intermediate role is filled by S111. C140 and C202 form a disulfide bridge. N-linked (GlcNAc...) asparagine glycosylation is present at N141. S174 provides a ligand contact to Mg(2+). E235 contacts Ca(2+). N241 is a glycosylation site (N-linked (GlcNAc...) asparagine). F288, E289, and D304 together coordinate Ca(2+). E330 is a Mg(2+) binding site. 4 residues coordinate Zn(2+): D335, H339, D376, and H377. Residue N426 is glycosylated (N-linked (GlcNAc...) asparagine). A disulfide bond links C485 and C492. A disordered region spans residues P496–G537. N-linked (GlcNAc...) asparagine glycosylation occurs at N509. Over residues T511–T527 the composition is skewed to low complexity. Positions R528–G537 are enriched in polar residues. Residue N531 is the site of GPI-anchor amidated asparagine attachment. Residues S532 to R551 constitute a propeptide, removed in mature form.

Belongs to the alkaline phosphatase family. In terms of assembly, homodimer. Mg(2+) is required as a cofactor. It depends on Zn(2+) as a cofactor. Requires Ca(2+) as cofactor.

The protein resides in the cell membrane. The catalysed reaction is a phosphate monoester + H2O = an alcohol + phosphate. Its function is as follows. Alkaline phosphatase that can hydrolyze various phosphate compounds. The protein is Intestinal-type alkaline phosphatase 2 of Rattus norvegicus (Rat).